A 369-amino-acid chain; its full sequence is FAD-dependent monooxygenase FPY4 (369 aa).

The protein belongs to the aromatic-ring hydroxylase family. It depends on FAD as a cofactor.

The protein operates within secondary metabolite biosynthesis. In terms of biological role, FAD-dependent monooxygenase; part of the gene cluster that mediates the biosynthesis of the gamma-pyrones fusapyrone (FPY) and deoxyfusapyrone (dFPY). FPY is an undecaketide and thus likely synthesized by the polyketide synthase FPY1 from acetyl-CoA functioning as starter unit and the addition of 10 malonyl-CoA extender units by successive Claisen-condensations. Next to this, FPY shares some rare features: C-glycosylated 4-deoxyglucose at C-3, a gem-dimethyl group at C-13, and an alpha-beta to beta-gamma double bond shift at C-20. During FPY biosynthesis mono-C-methyl groups are transferred to the tetra-, penta-, hexa- and heptaketide, while two C-methyl groups are transferred to the nonaketide, suggesting that the CMet domain is programmed to selectively catalyze two successive C-alpha-methylation reactions of the nonaketide, while other alpha-carbons are non- or mono-methylated only. While the origin of the 4'-deoxyglucose moiety remains opaque, its transfer to C-3 is most likely mediated by the C-glycosyltransferase FPY2. Next to this, the hydroxyl group present at C-33 and discriminating between FPY and dFPY, is likely to be installed by the cytochrome P450 monooxygenase FPY7. No putative function can be predicted for the remaining genes FPY3-FPY6. This Fusarium mangiferae (Mango malformation disease fungus) protein is FAD-dependent monooxygenase FPY4.